A 199-amino-acid polypeptide reads, in one-letter code: Dephospho-CoA kinase (199 aa).

The DPCK domain maps to 3–199 (ILGLTGSIGM…EVVKMPQRRA (197 aa)). Residue 11–16 (GMGKST) participates in ATP binding.

Belongs to the CoaE family.

It is found in the cytoplasm. It carries out the reaction 3'-dephospho-CoA + ATP = ADP + CoA + H(+). Its pathway is cofactor biosynthesis; coenzyme A biosynthesis; CoA from (R)-pantothenate: step 5/5. In terms of biological role, catalyzes the phosphorylation of the 3'-hydroxyl group of dephosphocoenzyme A to form coenzyme A. This Bradyrhizobium diazoefficiens (strain JCM 10833 / BCRC 13528 / IAM 13628 / NBRC 14792 / USDA 110) protein is Dephospho-CoA kinase.